The chain runs to 174 residues: Terminase small subunit (174 aa).

The protein belongs to the skunalikevirus terminase small subunit family.

Probable terminase small subunit. The terminase lies at a unique vertex of the procapsid and is composed of two subunits, a small terminase subunit and a large terminase subunit. Both terminase subunits heterooligomerize and are docked on the portal protein to form the packaging machine. Once the capsid is packaged with the DNA, the terminase complex is substituted by the connector proteins gp15. This is Terminase small subunit from Lactococcus phage p2 (Lactococcus lactis bacteriophage p2).